A 734-amino-acid chain; its full sequence is Serine protease FAM111B (734 aa).

Met-1 carries the post-translational modification N-acetylmethionine. Basic and acidic residues-rich tracts occupy residues 1–10 (MNSMKTEENK) and 17–32 (DDQR…TVMK). The interval 1–32 (MNSMKTEENKSFSAMEDDQRTRPEVSKDTVMK) is disordered. Lys-284 participates in a covalent cross-link: Glycyl lysine isopeptide (Lys-Gly) (interchain with G-Cter in SUMO2). The segment at 285-321 (QNESATDEINHQSLIQSKKKVHKPKKDGETKDVEHSR) is disordered. Positions 310 to 321 (KDGETKDVEHSR) are enriched in basic and acidic residues. Residues His-490, Asp-544, and Ser-650 each act as charge relay system in the active site. The tract at residues 712–734 (TYDEEKGKQESSLQDHQIEPMEC) is disordered.

It belongs to the FAM111 family. Widely expressed.

In terms of biological role, serine protease. This is Serine protease FAM111B from Homo sapiens (Human).